Reading from the N-terminus, the 248-residue chain is Deoxyribose-phosphate aldolase (248 aa).

The active-site Proton donor/acceptor is aspartate 106. The active-site Schiff-base intermediate with acetaldehyde is lysine 168. The active-site Proton donor/acceptor is the lysine 197.

The protein belongs to the DeoC/FbaB aldolase family. DeoC type 1 subfamily.

Its subcellular location is the cytoplasm. The catalysed reaction is 2-deoxy-D-ribose 5-phosphate = D-glyceraldehyde 3-phosphate + acetaldehyde. It participates in carbohydrate degradation; 2-deoxy-D-ribose 1-phosphate degradation; D-glyceraldehyde 3-phosphate and acetaldehyde from 2-deoxy-alpha-D-ribose 1-phosphate: step 2/2. In terms of biological role, catalyzes a reversible aldol reaction between acetaldehyde and D-glyceraldehyde 3-phosphate to generate 2-deoxy-D-ribose 5-phosphate. The polypeptide is Deoxyribose-phosphate aldolase (Rhizobium meliloti (strain 1021) (Ensifer meliloti)).